The chain runs to 417 residues: Serpin H1 (417 aa).

The signal sequence occupies residues 1 to 17 (MRSLLLGTLCLLAVALA). At Lys93 the chain carries N6-succinyllysine. 2 N-linked (GlcNAc...) asparagine glycosylation sites follow: Asn119 and Asn124. Residue Ser140 is modified to Phosphoserine. An N6-acetyllysine modification is found at Lys206. The residue at position 295 (Lys295) is an N6-succinyllysine. Lys318 bears the N6-acetyllysine mark. An N-linked (GlcNAc...) asparagine glycan is attached at Asn394. The short motif at 414–417 (RDEL) is the Prevents secretion from ER element.

Belongs to the serpin family.

Its subcellular location is the endoplasmic reticulum lumen. Its function is as follows. Binds specifically to collagen. Could be involved as a chaperone in the biosynthetic pathway of collagen. This is Serpin H1 (Serpinh1) from Rattus norvegicus (Rat).